A 336-amino-acid chain; its full sequence is Dihydroorotate dehydrogenase (quinone) (336 aa).

FMN contacts are provided by residues 62–66 (AGLDK) and Thr-86. Position 66 (Lys-66) interacts with substrate. 111–115 (NRMGF) lines the substrate pocket. FMN is bound by residues Asn-139 and Asn-172. Asn-172 provides a ligand contact to substrate. Ser-175 functions as the Nucleophile in the catalytic mechanism. Asn-177 lines the substrate pocket. Residues Lys-217 and Thr-245 each contribute to the FMN site. Position 246–247 (246–247 (NT)) interacts with substrate. FMN is bound by residues Gly-268, Gly-297, and 318 to 319 (YS).

It belongs to the dihydroorotate dehydrogenase family. Type 2 subfamily. As to quaternary structure, monomer. FMN serves as cofactor.

It localises to the cell membrane. The enzyme catalyses (S)-dihydroorotate + a quinone = orotate + a quinol. Its pathway is pyrimidine metabolism; UMP biosynthesis via de novo pathway; orotate from (S)-dihydroorotate (quinone route): step 1/1. Catalyzes the conversion of dihydroorotate to orotate with quinone as electron acceptor. This chain is Dihydroorotate dehydrogenase (quinone), found in Klebsiella pneumoniae subsp. pneumoniae (strain ATCC 700721 / MGH 78578).